A 425-amino-acid polypeptide reads, in one-letter code: Enolase (425 aa).

Q162 is a (2R)-2-phosphoglycerate binding site. Catalysis depends on E204, which acts as the Proton donor. Residues D241, E282, and D309 each contribute to the Mg(2+) site. (2R)-2-phosphoglycerate is bound by residues K334, R363, S364, and K385. K334 (proton acceptor) is an active-site residue.

Belongs to the enolase family. It depends on Mg(2+) as a cofactor.

It is found in the cytoplasm. The protein localises to the secreted. It localises to the cell surface. The catalysed reaction is (2R)-2-phosphoglycerate = phosphoenolpyruvate + H2O. It functions in the pathway carbohydrate degradation; glycolysis; pyruvate from D-glyceraldehyde 3-phosphate: step 4/5. In terms of biological role, catalyzes the reversible conversion of 2-phosphoglycerate (2-PG) into phosphoenolpyruvate (PEP). It is essential for the degradation of carbohydrates via glycolysis. The chain is Enolase from Corynebacterium aurimucosum (strain ATCC 700975 / DSM 44827 / CIP 107346 / CN-1) (Corynebacterium nigricans).